A 1241-amino-acid polypeptide reads, in one-letter code: MEALKTLLIANRGEIAVRVLKTAKKLNIRTIAVYTEPDAASTHVHLADEAILLSGPPSKAYIDGDQIIDIAKRKGADAIIPGYGFLSENSNFARDVASAGLAFVGPSPESIEAFGLKHTARELATKAGVPIVPGSQGLVTSEDEAVKIAQSLGFPVMLKATAGGGGMGLLTCNTEKEVRESFQTVQSRGEALFKNAGLFIERYYPSSHHIEVQVFGNGQGKAISIGERECSIQRRHQKVIEECPSPFVTRNPELRKGLCDAAVRLAESIDYGSAGTIEYLVDDESGKFFFLEMNTRLQVEHGITELCYGVDLVELMLRQADAQLSGRKGLEAEFLSSIPVGAPQGFAIEARVYAENPVRDFAPCPGILQDVDWKETTGSRIDTWVYRGIKVSANYDPLLAKVMYHASSRQKAIEGLRDILTGSRICGPPTNLGFLAEILANKDFNAGNTLTKFLNNFEYNLAAIDVISGGAYTLIQDWPGRPTVGRGFCHSGPMDSVAFRIANALVGNPVGLEGLEITLSGPELRFLGPAVISLCGAPIDAKLDEAPVPMWSRVKVSAGQRLKIGKTTGGGCRAYLAVLGGFPNIAEWFGSKATAPMVGVGGYQGRQLTSGDYLTISAQIPESDNELSLPEHLIPQYPDSWELMSMPGPYDEGYLAPESIDMLYNAEWTISHNAARGGIRLLGPKPTWARPDGGEGGAHPSNLIECGYAIGSINWTGDDPVIFPQDAPDLGGFVSSHTIVKADLWKLGQVKAGDKLKFRATSLKDTLLARNELERFISDIVQCCQKGEDFGSITPLASSLPPAMSSSTRVSGIVHQIPEKGNQPLVSYRQAGDDYLLIDYGVGAFDLNHRYRVTALKKVLSEAAGDISVSNGLINLVGCGNYLPKALMIYYDGTKIPQQKLIDYLCTIETQLGDLSRAKVPSRRFKLPLTFESKRQTDAIKRYMETQRPYASYLPDNIDFVARNNAFTRAELENIYLTASFMVITVGFFTALPIALPVDPRQRMNCPKMNPSRVFTPAGQVSWGGSCLAIYTVDSPGGYQMNGMTIPGVDILGTKRGYAPEKPWLFEDFDQITFYKVTEEEYERQLALFQSGRYEYEWEVVEFDMAEHNRLLKETKEEVKAIRARQRKAQAEMDLLEKELLERWAKEKAERGVSMDTVEELLKDPEITVIEAPLNANVWKVEVKEGDKLDKDQVVVILEAMKLEIAVRAESAAAGAVVEKILAQPGKSIEAGKPLMLVRRG.

In terms of domain architecture, Biotin carboxylation spans 3-459; the sequence is ALKTLLIANR…LTKFLNNFEY (457 aa). The ATP site is built by K117 and E201. Residues 121–321 enclose the ATP-grasp domain; the sequence is RELATKAGVP…LVELMLRQAD (201 aa). The 81-residue stretch at 1159-1239 folds into the Biotinyl-binding domain; the sequence is EELLKDPEIT…EAGKPLMLVR (81 aa). K1202 is subject to N6-biotinyllysine.

Requires biotin as cofactor.

It catalyses the reaction urea + hydrogencarbonate + ATP = urea-1-carboxylate + ADP + phosphate + H(+). Its function is as follows. Involved in the utilization of lactams. Required for the conversion of exogenous 2-pyrrolidinone (gamma-butyrolactam) to endogenous gamma-amino-n-butyrate (GABA). In Emericella nidulans (strain FGSC A4 / ATCC 38163 / CBS 112.46 / NRRL 194 / M139) (Aspergillus nidulans), this protein is Putative urea carboxylase (lamA).